The chain runs to 465 residues: MTSKLVISALGLCVSGALSTTLASTPATTNQQITKRIDYLQAQINELRTQQKKERQKKKAPYRKCSKKSCKYHSSRLSIGPYLHKTPAFDGSDLIINVPTVREDARLLLLQHQLEEECRALGVPLPEMPRVVFSGKLEGQTSYGSTYAGSRNANINFSGAEFDTYVQANPWVSGYMALDYDPDELADGSRVFMNRAFIMIGNLSRFPFYTSIGQVYVPFGRYSSMMITTPVTQALGRTRARAITLGYQQTGNNALHAELYGYQGLTNNFSRSNHNDQWGTDVGYEFSNGDRVSGEIGASFISNLADSQGMQATAFLDNETLRHRVSALGVYGSLAIKPVVFIAEYISALKSFDINDVNFANRGARPTAFHTEANYTFKTGSKPSSIGIGYGHTSQALGVGLPQDRYSVFYNVNIWKDTNFALEYRHDVNYTRNAISTGTNPTPAKVVADLGKSDNVVTAQFDLYF.

The signal sequence occupies residues 1 to 23 (MTSKLVISALGLCVSGALSTTLA). The stretch at 28 to 60 (TTNQQITKRIDYLQAQINELRTQQKKERQKKKA) forms a coiled coil.

This sequence belongs to the UPF0422 family.

This chain is UPF0422 protein CBU_0937, found in Coxiella burnetii (strain RSA 493 / Nine Mile phase I).